Here is a 439-residue protein sequence, read N- to C-terminus: Probable tRNA pseudouridine synthase D (439 aa).

The Nucleophile role is filled by D87. In terms of domain architecture, TRUD spans 166–391 (GVPNFFGIQR…SKGLRREILL (226 aa)).

The protein belongs to the pseudouridine synthase TruD family.

The enzyme catalyses uridine(13) in tRNA = pseudouridine(13) in tRNA. In terms of biological role, could be responsible for synthesis of pseudouridine from uracil-13 in transfer RNAs. This chain is Probable tRNA pseudouridine synthase D, found in Methanococcoides burtonii (strain DSM 6242 / NBRC 107633 / OCM 468 / ACE-M).